Reading from the N-terminus, the 486-residue chain is Outer dynein arm-docking complex subunit 4 (486 aa).

TPR repeat units lie at residues 14–47, 49–81, and 82–115; these read FTTY…QPDD, NCLV…NKNY, and FKGL…RPEL. Residues 153 to 180 are disordered; sequence GVHPQNLNPSNKKESKKHSKKTDKGEKT. TPR repeat units lie at residues 314 to 347, 354 to 387, 391 to 424, and 431 to 464; these read GNLH…AKKC, SRAL…ACGG, AWLF…ADDI, and LNAS…AKLL.

Component of the outer dynein arm-docking complex along with ODAD1, ODAD2 and ODAD3.

The protein localises to the cytoplasm. It localises to the cytoskeleton. It is found in the cilium axoneme. In terms of biological role, component of the outer dynein arm-docking complex (ODA-DC) that mediates outer dynein arms (ODA) binding onto the doublet microtubule. Plays an essential role for the assembly of ODA-DC and in the docking of ODA in ciliary axoneme. The chain is Outer dynein arm-docking complex subunit 4 (odad4) from Danio rerio (Zebrafish).